Here is a 100-residue protein sequence, read N- to C-terminus: Nucleoid-associated protein HPG27_32 (100 aa).

It belongs to the YbaB/EbfC family. Homodimer.

Its subcellular location is the cytoplasm. The protein resides in the nucleoid. Functionally, binds to DNA and alters its conformation. May be involved in regulation of gene expression, nucleoid organization and DNA protection. The protein is Nucleoid-associated protein HPG27_32 of Helicobacter pylori (strain G27).